Reading from the N-terminus, the 712-residue chain is Rap1 GTPase-activating protein 2 (712 aa).

The tract at residues 1–33 (MLAGLKVKKQELANSSDVTLPDRPLSPPLTAPP) is disordered. Ser-26 carries the post-translational modification Phosphoserine. A Phosphothreonine modification is found at Thr-30. Positions 229-445 (IVSYDEHDVN…RTRAALLDNL (217 aa)) constitute a Rap-GAP domain. Phosphoserine is present on residues Ser-488, Ser-495, Ser-525, Ser-539, Ser-545, Ser-593, and Ser-594. The disordered stretch occupies residues 529–712 (AAATAKNQSR…LSHASSSAGH (184 aa)). The segment covering 566–594 (DSASSTPKTPDGGHSSQEIKSETSSNPSS) has biased composition (polar residues). Basic and acidic residues predominate over residues 599 to 612 (PNKEKPFIKLKENG). Low complexity predominate over residues 617-629 (SRSSSSTSSFSST). Polar residues predominate over residues 641–652 (SGSSQPSTTSPF). Over residues 660-669 (SPSPSSESPS) the composition is skewed to low complexity. Residues 681–694 (RSPTDAKSRNSPRS) are compositionally biased toward polar residues.

Its subcellular location is the cytoplasm. In terms of biological role, GTPase activator for the nuclear Ras-related regulatory protein RAP-1A (KREV-1), converting it to the putatively inactive GDP-bound state. This Mus musculus (Mouse) protein is Rap1 GTPase-activating protein 2 (Rap1gap2).